The primary structure comprises 190 residues: Nuclear transcription factor Y subunit B-2 (190 aa).

Residues 1–30 are disordered; that stretch reads MGDSDRDSGGGQNGNNQNGQSSLSPREQDR. Residues 32-38 mediate DNA binding; that stretch reads LPIANVS. Positions 59-70 are subunit association domain (SAD); it reads MQECVSEFISFV. The interval 168–190 is disordered; the sequence is HMYGATGGGSDSGGGAASGRTRT. The span at 172–184 shows a compositional bias: gly residues; sequence ATGGGSDSGGGAA.

This sequence belongs to the NFYB/HAP3 subunit family. Heterotrimeric transcription factor composed of three components, NF-YA, NF-YB and NF-YC. NF-YB and NF-YC must interact and dimerize for NF-YA association and DNA binding. Binds directly with DPB3-1. Ubiquitous. Predominantly expressed in flowers and siliques.

It localises to the nucleus. Functionally, component of the NF-Y/HAP transcription factor complex. The NF-Y complex stimulates the transcription of various genes by recognizing and binding to a CCAAT motif in promoters. The polypeptide is Nuclear transcription factor Y subunit B-2 (Arabidopsis thaliana (Mouse-ear cress)).